The following is a 478-amino-acid chain: 5-hydroxytryptamine receptor 3A (478 aa).

Positions 1–23 (MLLWVQQALLALLLPTLLAQGEA) are cleaved as a signal peptide. The Extracellular portion of the chain corresponds to 24-241 (RRSRNTTRPA…MKFYVVIRRR (218 aa)). N-linked (GlcNAc...) asparagine glycans are attached at residues Asn28, Asn104, Asn170, and Asn186. Cysteines 157 and 171 form a disulfide. The helical transmembrane segment at 242–268 (PLFYVVSLLLPSIFLMVMDIVGFYLPP) threads the bilayer. The Cytoplasmic portion of the chain corresponds to 269 to 273 (NSGER). A helical transmembrane segment spans residues 274–292 (VSFKITLLLGYSVFLIIVS). Topologically, residues 293–302 (DTLPATAIGT) are extracellular. A helical transmembrane segment spans residues 303–321 (PLIGVYFVVCMALLVISLA). The Cytoplasmic portion of the chain corresponds to 322–455 (ETIFIVRLVH…GSVLDKLLFH (134 aa)). Residues 389 to 408 (GGPQDFEKSPRDRCSPPPPP) form a disordered region. Residues 393–402 (DFEKSPRDRC) are compositionally biased toward basic and acidic residues. Residues 414 to 450 (AVCGLLQELSSIRQFLEKRDEIREVARDWLRVGSVLD) are HA-stretch; determines single-channel conductance in 5-HT3 receptors. A helical transmembrane segment spans residues 456 to 475 (IYLLAVLAYSITLVMLWSIW). Over 476–478 (QYA) the chain is Extracellular.

It belongs to the ligand-gated ion channel (TC 1.A.9) family. 5-hydroxytryptamine receptor (TC 1.A.9.2) subfamily. HTR3A sub-subfamily. As to quaternary structure, forms homopentameric as well as heteropentameric serotonin-activated cation-selective channel complexes with HTR3B or HTR3C or HTR3D or HTR3E. The homomeric complex is functional but exhibits low conductance with modified voltage dependence, and decreased agonist and antagonist affinity. Heteropentameric complexes display properties which resemble that of neuronal serotonin-activated channels in vivo. Interacts with RIC3. In terms of tissue distribution, expressed in cerebral cortex, amygdala, hippocampus, and testis. Detected in monocytes of the spleen and tonsil, in small and large intestine, uterus, prostate, ovary and placenta.

The protein resides in the postsynaptic cell membrane. It localises to the cell membrane. It catalyses the reaction Na(+)(in) = Na(+)(out). It carries out the reaction K(+)(in) = K(+)(out). The catalysed reaction is Ca(2+)(in) = Ca(2+)(out). The enzyme catalyses Mg(2+)(in) = Mg(2+)(out). Forms serotonin (5-hydroxytryptamine/5-HT3)-activated cation-selective channel complexes, which when activated cause fast, depolarizing responses in neurons. The sequence is that of 5-hydroxytryptamine receptor 3A from Homo sapiens (Human).